A 283-amino-acid chain; its full sequence is uncharacterized protein (283 aa).

Positions 208–232 (SMENKVNETQNSKEDEKKKNDGDGK) are enriched in basic and acidic residues. Residues 208–237 (SMENKVNETQNSKEDEKKKNDGDGKRSKKK) are disordered.

This is an uncharacterized protein from Saccharomyces cerevisiae (strain ATCC 204508 / S288c) (Baker's yeast).